The primary structure comprises 152 residues: Ribonuclease H (152 aa).

The RNase H type-1 domain occupies 1–142 (MKEVTIYTDG…CDELARAAIA (142 aa)). 4 residues coordinate Mg(2+): Asp-9, Glu-47, Asp-69, and Asp-134.

Belongs to the RNase H family. In terms of assembly, monomer. It depends on Mg(2+) as a cofactor.

It is found in the cytoplasm. The enzyme catalyses Endonucleolytic cleavage to 5'-phosphomonoester.. In terms of biological role, endonuclease that specifically degrades the RNA of RNA-DNA hybrids. In Moorella thermoacetica (strain ATCC 39073 / JCM 9320), this protein is Ribonuclease H.